The chain runs to 229 residues: N-(5'-phosphoribosyl)anthranilate isomerase (229 aa).

This sequence belongs to the TrpF family.

The catalysed reaction is N-(5-phospho-beta-D-ribosyl)anthranilate = 1-(2-carboxyphenylamino)-1-deoxy-D-ribulose 5-phosphate. The protein operates within amino-acid biosynthesis; L-tryptophan biosynthesis; L-tryptophan from chorismate: step 3/5. This is N-(5'-phosphoribosyl)anthranilate isomerase from Clostridium beijerinckii (strain ATCC 51743 / NCIMB 8052) (Clostridium acetobutylicum).